A 56-amino-acid chain; its full sequence is Alpha-conotoxin EpI (56 aa).

An N-terminal signal peptide occupies residues 1–16 (MFTVFLLVVLATTVVS). The propeptide occupies 17-39 (FTSDRASDSRKDAASGLIALTIK). Disulfide bonds link cysteine 41/cysteine 47 and cysteine 42/cysteine 55. The tract at residues 43-45 (SDP) is ser-Xaa-Pro motif, crucial for potent interaction with nAChR. Tyrosine 54 is subject to Sulfotyrosine. Cysteine amide is present on cysteine 55.

This sequence belongs to the conotoxin A superfamily. Both tyrosine sulfation and C-terminal amidation are important for activity and structure stability. As to expression, expressed by the venom duct.

It localises to the secreted. Its function is as follows. Alpha-conotoxins act on postsynaptic membranes, they bind to the nicotinic acetylcholine receptors (nAChR) and thus inhibit them. This native peptide blocks mammalian nicotinic acetylcholine receptors composed of alpha-3-beta-2/CHRNA3-CHRNB2 and alpha-3-beta-4/CHRNA3-CHRNB4 subunits. The protein is Alpha-conotoxin EpI of Conus episcopatus (Bishop's cone).